A 584-amino-acid polypeptide reads, in one-letter code: Glycosyltransferase family 92 protein Os08g0121900 (584 aa).

Over residues Met1–Leu10 the composition is skewed to basic and acidic residues. Residues Met1–Arg33 form a disordered region. Gly residues predominate over residues Lys16–Gly28. Residues Phe43–Ile63 form a helical membrane-spanning segment. The 212-residue stretch at His314 to Tyr525 folds into the GT92 domain.

The protein belongs to the glycosyltransferase 92 family.

It localises to the membrane. The sequence is that of Glycosyltransferase family 92 protein Os08g0121900 from Oryza sativa subsp. japonica (Rice).